We begin with the raw amino-acid sequence, 186 residues long: Pyridoxal 5'-phosphate synthase subunit PdxT (186 aa).

46-48 (GES) is a binding site for L-glutamine. Cys75 acts as the Nucleophile in catalysis. Residues Arg101 and 127–128 (IR) contribute to the L-glutamine site. Residues His164 and Glu166 each act as charge relay system in the active site.

It belongs to the glutaminase PdxT/SNO family. In the presence of PdxS, forms a dodecamer of heterodimers. Only shows activity in the heterodimer.

The catalysed reaction is aldehydo-D-ribose 5-phosphate + D-glyceraldehyde 3-phosphate + L-glutamine = pyridoxal 5'-phosphate + L-glutamate + phosphate + 3 H2O + H(+). The enzyme catalyses L-glutamine + H2O = L-glutamate + NH4(+). It participates in cofactor biosynthesis; pyridoxal 5'-phosphate biosynthesis. In terms of biological role, catalyzes the hydrolysis of glutamine to glutamate and ammonia as part of the biosynthesis of pyridoxal 5'-phosphate. The resulting ammonia molecule is channeled to the active site of PdxS. This chain is Pyridoxal 5'-phosphate synthase subunit PdxT, found in Methanococcus aeolicus (strain ATCC BAA-1280 / DSM 17508 / OCM 812 / Nankai-3).